Consider the following 220-residue polypeptide: 7-cyano-7-deazaguanine synthase (220 aa).

7–17 (LSGGMDSSITA) lines the ATP pocket. Positions 185, 193, 196, and 199 each coordinate Zn(2+).

The protein belongs to the QueC family. Requires Zn(2+) as cofactor.

It carries out the reaction 7-carboxy-7-deazaguanine + NH4(+) + ATP = 7-cyano-7-deazaguanine + ADP + phosphate + H2O + H(+). The protein operates within purine metabolism; 7-cyano-7-deazaguanine biosynthesis. In terms of biological role, catalyzes the ATP-dependent conversion of 7-carboxy-7-deazaguanine (CDG) to 7-cyano-7-deazaguanine (preQ(0)). This is 7-cyano-7-deazaguanine synthase from Nitratiruptor sp. (strain SB155-2).